The chain runs to 262 residues: Hydroxyethylthiazole kinase (262 aa).

Met50 is a substrate binding site. 2 residues coordinate ATP: Arg125 and Thr171. A substrate-binding site is contributed by Gly198.

Belongs to the Thz kinase family. Mg(2+) serves as cofactor.

The catalysed reaction is 5-(2-hydroxyethyl)-4-methylthiazole + ATP = 4-methyl-5-(2-phosphooxyethyl)-thiazole + ADP + H(+). It participates in cofactor biosynthesis; thiamine diphosphate biosynthesis; 4-methyl-5-(2-phosphoethyl)-thiazole from 5-(2-hydroxyethyl)-4-methylthiazole: step 1/1. Its function is as follows. Catalyzes the phosphorylation of the hydroxyl group of 4-methyl-5-beta-hydroxyethylthiazole (THZ). This Escherichia coli O6:H1 (strain CFT073 / ATCC 700928 / UPEC) protein is Hydroxyethylthiazole kinase.